A 338-amino-acid chain; its full sequence is Ketol-acid reductoisomerase (NADP(+)) (338 aa).

In terms of domain architecture, KARI N-terminal Rossmann spans 1-181; the sequence is MQIFYDKDCD…GGGRTGIIET (181 aa). NADP(+) is bound by residues 24-27, arginine 47, serine 50, serine 52, and 82-85; these read YGSQ and DEFQ. Residue histidine 107 is part of the active site. Position 133 (glycine 133) interacts with NADP(+). The region spanning 182 to 327 is the KARI C-terminal knotted domain; sequence SFREETETDL…AKLRAMMPWI (146 aa). Residues aspartate 190, glutamate 194, glutamate 226, and glutamate 230 each contribute to the Mg(2+) site. Serine 251 is a substrate binding site.

Belongs to the ketol-acid reductoisomerase family. Mg(2+) is required as a cofactor.

It catalyses the reaction (2R)-2,3-dihydroxy-3-methylbutanoate + NADP(+) = (2S)-2-acetolactate + NADPH + H(+). It carries out the reaction (2R,3R)-2,3-dihydroxy-3-methylpentanoate + NADP(+) = (S)-2-ethyl-2-hydroxy-3-oxobutanoate + NADPH + H(+). It participates in amino-acid biosynthesis; L-isoleucine biosynthesis; L-isoleucine from 2-oxobutanoate: step 2/4. The protein operates within amino-acid biosynthesis; L-valine biosynthesis; L-valine from pyruvate: step 2/4. Involved in the biosynthesis of branched-chain amino acids (BCAA). Catalyzes an alkyl-migration followed by a ketol-acid reduction of (S)-2-acetolactate (S2AL) to yield (R)-2,3-dihydroxy-isovalerate. In the isomerase reaction, S2AL is rearranged via a Mg-dependent methyl migration to produce 3-hydroxy-3-methyl-2-ketobutyrate (HMKB). In the reductase reaction, this 2-ketoacid undergoes a metal-dependent reduction by NADPH to yield (R)-2,3-dihydroxy-isovalerate. The protein is Ketol-acid reductoisomerase (NADP(+)) of Acinetobacter baumannii (strain AB0057).